Consider the following 102-residue polypeptide: Small ribosomal subunit protein uS10 (102 aa).

Belongs to the universal ribosomal protein uS10 family. In terms of assembly, part of the 30S ribosomal subunit.

Involved in the binding of tRNA to the ribosomes. This Lactobacillus gasseri (strain ATCC 33323 / DSM 20243 / BCRC 14619 / CIP 102991 / JCM 1131 / KCTC 3163 / NCIMB 11718 / NCTC 13722 / AM63) protein is Small ribosomal subunit protein uS10.